The primary structure comprises 159 residues: 17.7 kDa class I heat shock protein (159 aa).

The sHSP domain maps to 45-159 (DAAAFAGARI…PDVKSIQISG (115 aa)).

This sequence belongs to the small heat shock protein (HSP20) family. May form oligomeric structures.

The protein localises to the cytoplasm. In Oryza sativa subsp. japonica (Rice), this protein is 17.7 kDa class I heat shock protein (HSP17.7).